Reading from the N-terminus, the 440-residue chain is Glutamyl-tRNA reductase (440 aa).

Substrate is bound by residues 50–53, Ser109, 114–116, and Gln120; these read TCNR and EPQ. Catalysis depends on Cys51, which acts as the Nucleophile. 189-194 provides a ligand contact to NADP(+); the sequence is GAGEMA.

Belongs to the glutamyl-tRNA reductase family. Homodimer.

It catalyses the reaction (S)-4-amino-5-oxopentanoate + tRNA(Glu) + NADP(+) = L-glutamyl-tRNA(Glu) + NADPH + H(+). Its pathway is porphyrin-containing compound metabolism; protoporphyrin-IX biosynthesis; 5-aminolevulinate from L-glutamyl-tRNA(Glu): step 1/2. In terms of biological role, catalyzes the NADPH-dependent reduction of glutamyl-tRNA(Glu) to glutamate 1-semialdehyde (GSA). In Nitratidesulfovibrio vulgaris (strain DP4) (Desulfovibrio vulgaris), this protein is Glutamyl-tRNA reductase.